Here is a 595-residue protein sequence, read N- to C-terminus: NAD-dependent protein deacetylase hst4 (595 aa).

The interval 1 to 106 (MAPRKTKPAT…HLDLTPRLGF (106 aa)) is disordered. A compositionally biased stretch (low complexity) spans 9–32 (ATKPAAKPTPASTATTSSCPSPKS). The Deacetylase sirtuin-type domain maps to 109–428 (YGDQEPQLNL…SADVERVKNE (320 aa)). Residues 134–153 (GAGISTSAGIPDFRSDDGLF) and 222–225 (QNID) contribute to the NAD(+) site. The Proton acceptor role is filled by H253. Zn(2+)-binding residues include C261, C264, C283, and C286. NAD(+) is bound by residues 342–344 (GTS), 373–375 (NNE), and C394. A compositionally biased stretch (polar residues) spans 445-473 (QAQTGMLTPSSSYDGDVENASTTTLSNPA). The interval 445–595 (QAQTGMLTPS…IPKGMGKLLD (151 aa)) is disordered. Composition is skewed to basic and acidic residues over residues 478–492 (KLTEILKASKKDAPK) and 530–543 (TPEEKSVKLEEHKA).

It belongs to the sirtuin family. Class I subfamily. It depends on Zn(2+) as a cofactor.

It localises to the nucleus. It carries out the reaction N(6)-acetyl-L-lysyl-[protein] + NAD(+) + H2O = 2''-O-acetyl-ADP-D-ribose + nicotinamide + L-lysyl-[protein]. Its function is as follows. NAD-dependent histone deacetylase, which could function in telomeric silencing, cell cycle progression and chromosome stability. This Emericella nidulans (strain FGSC A4 / ATCC 38163 / CBS 112.46 / NRRL 194 / M139) (Aspergillus nidulans) protein is NAD-dependent protein deacetylase hst4.